A 104-amino-acid polypeptide reads, in one-letter code: ATP synthase subunit c (104 aa).

The next 2 helical transmembrane spans lie at 37–57 and 83–103; these read LLGA…QGAV and AGIA…LIFV.

It belongs to the ATPase C chain family. As to quaternary structure, F-type ATPases have 2 components, F(1) - the catalytic core - and F(0) - the membrane proton channel. F(1) has five subunits: alpha(3), beta(3), gamma(1), delta(1), epsilon(1). F(0) has three main subunits: a(1), b(2) and c(10-14). The alpha and beta chains form an alternating ring which encloses part of the gamma chain. F(1) is attached to F(0) by a central stalk formed by the gamma and epsilon chains, while a peripheral stalk is formed by the delta and b chains.

The protein resides in the cell membrane. F(1)F(0) ATP synthase produces ATP from ADP in the presence of a proton or sodium gradient. F-type ATPases consist of two structural domains, F(1) containing the extramembraneous catalytic core and F(0) containing the membrane proton channel, linked together by a central stalk and a peripheral stalk. During catalysis, ATP synthesis in the catalytic domain of F(1) is coupled via a rotary mechanism of the central stalk subunits to proton translocation. In terms of biological role, key component of the F(0) channel; it plays a direct role in translocation across the membrane. A homomeric c-ring of between 10-14 subunits forms the central stalk rotor element with the F(1) delta and epsilon subunits. This is ATP synthase subunit c from Mesoplasma florum (strain ATCC 33453 / NBRC 100688 / NCTC 11704 / L1) (Acholeplasma florum).